Here is a 150-residue protein sequence, read N- to C-terminus: Macrodomain Ter protein (150 aa).

It belongs to the MatP family. In terms of assembly, homodimer.

The protein localises to the cytoplasm. Functionally, required for spatial organization of the terminus region of the chromosome (Ter macrodomain) during the cell cycle. Prevents early segregation of duplicated Ter macrodomains during cell division. Binds specifically to matS, which is a 13 bp signature motif repeated within the Ter macrodomain. This is Macrodomain Ter protein from Salmonella typhi.